Here is a 151-residue protein sequence, read N- to C-terminus: 3-dehydroquinate dehydratase (151 aa).

The active-site Proton acceptor is the tyrosine 24. Residues asparagine 76, histidine 82, and aspartate 89 each coordinate substrate. Histidine 102 acts as the Proton donor in catalysis. Substrate is bound by residues 103-104 and arginine 113; that span reads VS.

It belongs to the type-II 3-dehydroquinase family. Homododecamer.

It catalyses the reaction 3-dehydroquinate = 3-dehydroshikimate + H2O. It participates in metabolic intermediate biosynthesis; chorismate biosynthesis; chorismate from D-erythrose 4-phosphate and phosphoenolpyruvate: step 3/7. Functionally, catalyzes a trans-dehydration via an enolate intermediate. The sequence is that of 3-dehydroquinate dehydratase from Rhodopseudomonas palustris (strain ATCC BAA-98 / CGA009).